The primary structure comprises 57 residues: Conotoxin Cal6.39 (57 aa).

Residues 1-18 (MSGTTVLLLTCLFLVTMA) form the signal peptide. Intrachain disulfides connect cysteine 22/cysteine 36, cysteine 29/cysteine 46, and cysteine 35/cysteine 52.

As to expression, expressed by the venom duct.

The protein resides in the secreted. Probable neurotoxin. The sequence is that of Conotoxin Cal6.39 from Californiconus californicus (California cone).